Here is a 66-residue protein sequence, read N- to C-terminus: Large ribosomal subunit protein bL33c (66 aa).

This sequence belongs to the bacterial ribosomal protein bL33 family.

The protein resides in the plastid. Its subcellular location is the chloroplast. This chain is Large ribosomal subunit protein bL33c, found in Aethionema grandiflorum (Persian stone-cress).